The following is a 188-amino-acid chain: VEMACPGKVSCLGDKAITVLSENNPLTGTKGEIRMGDGFNVEEEIEKVLEQVGKTTFDVALYASGSWKKPQPLAVMVATLAVMQVRDVVWLSALAMACRLLMDTFAEKYFLQPVLQPSYELFKNAGSNMDGTVTSFDNIYYKTNSWASPLSIRGGYPMHSTSNMGSQIYQDNPVANCLDLSSLDLANR.

Belongs to the peroxidase family. Post-translationally, partially N-glycosylated.

The protein resides in the secreted. It carries out the reaction 2 a phenolic donor + H2O2 = 2 a phenolic radical donor + 2 H2O. This chain is Peroxidase B, found in Aloe vera (Aloe).